The sequence spans 424 residues: Serine--tRNA ligase (424 aa).

230-232 (TAE) lines the L-serine pocket. Residue 261-263 (RSE) participates in ATP binding. Residue glutamate 284 coordinates L-serine. 348–351 (EISS) is a binding site for ATP. Serine 384 provides a ligand contact to L-serine.

It belongs to the class-II aminoacyl-tRNA synthetase family. Type-1 seryl-tRNA synthetase subfamily. Homodimer. The tRNA molecule binds across the dimer.

The protein resides in the cytoplasm. The enzyme catalyses tRNA(Ser) + L-serine + ATP = L-seryl-tRNA(Ser) + AMP + diphosphate + H(+). It carries out the reaction tRNA(Sec) + L-serine + ATP = L-seryl-tRNA(Sec) + AMP + diphosphate + H(+). It functions in the pathway aminoacyl-tRNA biosynthesis; selenocysteinyl-tRNA(Sec) biosynthesis; L-seryl-tRNA(Sec) from L-serine and tRNA(Sec): step 1/1. Catalyzes the attachment of serine to tRNA(Ser). Is also able to aminoacylate tRNA(Sec) with serine, to form the misacylated tRNA L-seryl-tRNA(Sec), which will be further converted into selenocysteinyl-tRNA(Sec). The sequence is that of Serine--tRNA ligase from Streptococcus pneumoniae (strain ATCC 700669 / Spain 23F-1).